Consider the following 156-residue polypeptide: Small ribosomal subunit protein uS7 (156 aa).

Belongs to the universal ribosomal protein uS7 family. Part of the 30S ribosomal subunit. Contacts proteins S9 and S11.

One of the primary rRNA binding proteins, it binds directly to 16S rRNA where it nucleates assembly of the head domain of the 30S subunit. Is located at the subunit interface close to the decoding center, probably blocks exit of the E-site tRNA. This chain is Small ribosomal subunit protein uS7, found in Salinispora tropica (strain ATCC BAA-916 / DSM 44818 / JCM 13857 / NBRC 105044 / CNB-440).